Reading from the N-terminus, the 476-residue chain is MSVNEENGAGKDASRANAQWGGRFAGGPSAIMQDINASIGFDHVLWRQDIAGSLAHAAMLARTGIISADDEAAIRRGLTEIGAEIEAGRFDFSTALEDIHMNIEARLSDRIGEAGKRLHTARSRNDQVATDFRLWVRDAIDGLDAQAASLMRALCRRAEQHAADPMPGFTHLQTAQPVTFGHHLMAYVEMLGRDRGRLADARRRLNECPLGSAALAGTSFPIDRRMTAAALGFDRPTANSLDAVSDRDFALEYLSALSIMAMHLSRLSEEIVIWCSAPFAFVRLSDAFTTGSSIMPQKRNPDAAELVRAKIGRVTGALVGLLTVMKGLPLAYAKDMQEDKEPVFAATDAAALSLAACDGMIRDLTANTDRMRAYAGSGFSTATDLADWLVRVLKLPFRTAHHVTGRLVGLAESRGVDLSDLSLADMQAEEAGITQDIFSVLTVESSIASRTSEGGTAPDNVRAQAARWLAVLENGA.

Belongs to the lyase 1 family. Argininosuccinate lyase subfamily.

It localises to the cytoplasm. The enzyme catalyses 2-(N(omega)-L-arginino)succinate = fumarate + L-arginine. Its pathway is amino-acid biosynthesis; L-arginine biosynthesis; L-arginine from L-ornithine and carbamoyl phosphate: step 3/3. This chain is Argininosuccinate lyase, found in Gluconacetobacter diazotrophicus (strain ATCC 49037 / DSM 5601 / CCUG 37298 / CIP 103539 / LMG 7603 / PAl5).